A 66-amino-acid chain; its full sequence is Cold shock-like protein CspD (66 aa).

The region spanning 4-63 is the CSD domain; the sequence is GKVKWFNSEKGFGFIEVEGGDDVFVHFSAIQGDGFKTLEEGQEVSFEIVEGNRGPQAANV.

As to quaternary structure, homodimer.

The protein localises to the cytoplasm. This is Cold shock-like protein CspD (cspD) from Bacillus anthracis.